The primary structure comprises 175 residues: Shikimate kinase (175 aa).

An ATP-binding site is contributed by 10–15 (GAGKTT). Position 14 (T14) interacts with Mg(2+). Substrate is bound by residues D32, R56, and G78. R116 lines the ATP pocket. R135 contacts substrate.

This sequence belongs to the shikimate kinase family. Monomer. Mg(2+) serves as cofactor.

It is found in the cytoplasm. The enzyme catalyses shikimate + ATP = 3-phosphoshikimate + ADP + H(+). It functions in the pathway metabolic intermediate biosynthesis; chorismate biosynthesis; chorismate from D-erythrose 4-phosphate and phosphoenolpyruvate: step 5/7. Catalyzes the specific phosphorylation of the 3-hydroxyl group of shikimic acid using ATP as a cosubstrate. In Aromatoleum aromaticum (strain DSM 19018 / LMG 30748 / EbN1) (Azoarcus sp. (strain EbN1)), this protein is Shikimate kinase.